The following is a 1325-amino-acid chain: NHS-like protein 3 (1325 aa).

A coiled-coil region spans residues Leu-53–Asn-85. Disordered stretches follow at residues Gln-68 to Ser-92, Gln-111 to Ser-131, Cys-291 to Cys-348, Met-368 to Ser-570, Gln-595 to Lys-614, Glu-829 to Ser-891, Leu-935 to Phe-981, Val-1084 to Val-1138, Gly-1243 to Thr-1272, and Ser-1293 to Ser-1313. The span at Ala-296–Thr-334 shows a compositional bias: low complexity. Positions Ile-335 to Ser-344 are enriched in polar residues. Residues Ser-369–Ser-378 are compositionally biased toward low complexity. A compositionally biased stretch (polar residues) spans Val-400–Val-412. The span at Leu-428–Asp-447 shows a compositional bias: basic and acidic residues. Positions Pro-450 to Ile-460 are enriched in polar residues. A compositionally biased stretch (basic and acidic residues) spans Lys-515–Asp-524. A compositionally biased stretch (low complexity) spans Ser-528–Thr-541. Positions Ser-834 to Ile-850 are enriched in pro residues. Composition is skewed to polar residues over residues Leu-935–Glu-948 and Gln-1088–Thr-1100. Positions Lys-1124–Val-1138 are enriched in low complexity. Residues Arg-1302–Gln-1311 are compositionally biased toward polar residues.

Its function is as follows. Able to directly activate the TNF-NFkappaB signaling pathway. The sequence is that of NHS-like protein 3 (nhsl3) from Danio rerio (Zebrafish).